The chain runs to 147 residues: Basic phospholipase A2 beta-bungarotoxin A1 chain (147 aa).

The first 19 residues, Met-1–Ala-19, serve as a signal peptide directing secretion. Residues Ala-20–Leu-27 constitute a propeptide that is removed on maturation. Intrachain disulfides connect Cys-54/Cys-146, Cys-56/Cys-72, Cys-71/Cys-127, Cys-78/Cys-120, Cys-88/Cys-113, and Cys-106/Cys-118. Ca(2+)-binding residues include Tyr-55, Gly-57, and Gly-59. The active site involves His-75. A Ca(2+)-binding site is contributed by Asp-76. Asp-121 is an active-site residue.

This sequence belongs to the phospholipase A2 family. Group I subfamily. D49 sub-subfamily. As to quaternary structure, heterodimer; disulfide-linked. The A chains have phospholipase A2 activity and the B chains show homology with the basic protease inhibitors. Requires Ca(2+) as cofactor. As to expression, expressed by the venom gland.

The protein resides in the secreted. The enzyme catalyses a 1,2-diacyl-sn-glycero-3-phosphocholine + H2O = a 1-acyl-sn-glycero-3-phosphocholine + a fatty acid + H(+). In terms of biological role, snake venom phospholipase A2 (PLA2) that inhibits neuromuscular transmission by blocking acetylcholine release from the nerve termini. PLA2 catalyzes the calcium-dependent hydrolysis of the 2-acyl groups in 3-sn-phosphoglycerides. The chain is Basic phospholipase A2 beta-bungarotoxin A1 chain from Bungarus caeruleus (Indian krait).